We begin with the raw amino-acid sequence, 567 residues long: Laccase-7 (567 aa).

Positions 1-23 (MEGVRVPIACALILLAISSITSA) are cleaved as a signal peptide. 2 Plastocyanin-like domains span residues 31–147 (NVQN…PKSG) and 157–310 (KEVP…YGGA). Asn34, Asn50, and Asn77 each carry an N-linked (GlcNAc...) asparagine glycan. Cu cation is bound by residues His81 and His83. Asn115 carries an N-linked (GlcNAc...) asparagine glycan. Positions 126 and 128 each coordinate Cu cation. Asn186, Asn298, Asn339, Asn374, Asn386, Asn427, and Asn450 each carry an N-linked (GlcNAc...) asparagine glycan. Positions 412-551 (DFPDQPPVKF…GMIFVVKNGP (140 aa)) constitute a Plastocyanin-like 3 domain. The Cu cation site is built by His468, His471, His473, His530, Cys531, His532, and His536.

This sequence belongs to the multicopper oxidase family. The cofactor is Cu cation. As to expression, predominantly expressed in tissues other than the inflorescence stem.

Its subcellular location is the secreted. It is found in the extracellular space. The protein resides in the apoplast. The catalysed reaction is 4 hydroquinone + O2 = 4 benzosemiquinone + 2 H2O. Functionally, lignin degradation and detoxification of lignin-derived products. In Arabidopsis thaliana (Mouse-ear cress), this protein is Laccase-7 (LAC7).